Consider the following 407-residue polypeptide: Arginine deiminase (407 aa).

Residue cysteine 397 is the Amidino-cysteine intermediate of the active site.

Belongs to the arginine deiminase family.

The protein localises to the cytoplasm. It carries out the reaction L-arginine + H2O = L-citrulline + NH4(+). It functions in the pathway amino-acid degradation; L-arginine degradation via ADI pathway; carbamoyl phosphate from L-arginine: step 1/2. This is Arginine deiminase from Pediococcus pentosaceus (strain ATCC 25745 / CCUG 21536 / LMG 10740 / 183-1w).